Consider the following 605-residue polypeptide: UvrABC system protein C (605 aa).

In terms of domain architecture, GIY-YIG spans 14–92 (QSCGVYKMIG…IKSLKPSYNI (79 aa)). Positions 202–237 (KEVQRQLFSTMEKCSREMNYELAAVYRDRLKFLQQI) constitute a UVR domain.

It belongs to the UvrC family. In terms of assembly, interacts with UvrB in an incision complex.

The protein localises to the cytoplasm. In terms of biological role, the UvrABC repair system catalyzes the recognition and processing of DNA lesions. UvrC both incises the 5' and 3' sides of the lesion. The N-terminal half is responsible for the 3' incision and the C-terminal half is responsible for the 5' incision. This Wolbachia pipientis subsp. Culex pipiens (strain wPip) protein is UvrABC system protein C.